The sequence spans 368 residues: tRNA(Met) cytidine acetate ligase (368 aa).

ATP-binding positions include 7 to 20 (IAEF…HKYL), Gly-96, Asn-152, and Arg-175.

It belongs to the TmcAL family.

The protein localises to the cytoplasm. It carries out the reaction cytidine(34) in elongator tRNA(Met) + acetate + ATP = N(4)-acetylcytidine(34) in elongator tRNA(Met) + AMP + diphosphate. Catalyzes the formation of N(4)-acetylcytidine (ac(4)C) at the wobble position of elongator tRNA(Met), using acetate and ATP as substrates. First activates an acetate ion to form acetyladenylate (Ac-AMP) and then transfers the acetyl group to tRNA to form ac(4)C34. This is tRNA(Met) cytidine acetate ligase from Streptococcus pyogenes serotype M28 (strain MGAS6180).